The sequence spans 166 residues: Ribosome maturation factor RimM (166 aa).

The 76-residue stretch at 90 to 165 (NDNDAFSIFY…IITLKNIEGL (76 aa)) folds into the PRC barrel domain.

Belongs to the RimM family. Binds ribosomal protein uS19.

The protein localises to the cytoplasm. Functionally, an accessory protein needed during the final step in the assembly of 30S ribosomal subunit, possibly for assembly of the head region. Essential for efficient processing of 16S rRNA. May be needed both before and after RbfA during the maturation of 16S rRNA. It has affinity for free ribosomal 30S subunits but not for 70S ribosomes. The polypeptide is Ribosome maturation factor RimM (Mesoplasma florum (strain ATCC 33453 / NBRC 100688 / NCTC 11704 / L1) (Acholeplasma florum)).